The following is a 571-amino-acid chain: Proline--tRNA ligase (571 aa).

It belongs to the class-II aminoacyl-tRNA synthetase family. ProS type 1 subfamily. Homodimer.

It localises to the cytoplasm. It catalyses the reaction tRNA(Pro) + L-proline + ATP = L-prolyl-tRNA(Pro) + AMP + diphosphate. Its function is as follows. Catalyzes the attachment of proline to tRNA(Pro) in a two-step reaction: proline is first activated by ATP to form Pro-AMP and then transferred to the acceptor end of tRNA(Pro). As ProRS can inadvertently accommodate and process non-cognate amino acids such as alanine and cysteine, to avoid such errors it has two additional distinct editing activities against alanine. One activity is designated as 'pretransfer' editing and involves the tRNA(Pro)-independent hydrolysis of activated Ala-AMP. The other activity is designated 'posttransfer' editing and involves deacylation of mischarged Ala-tRNA(Pro). The misacylated Cys-tRNA(Pro) is not edited by ProRS. The polypeptide is Proline--tRNA ligase (Pseudomonas aeruginosa (strain UCBPP-PA14)).